The chain runs to 181 residues: Oligoribonuclease (181 aa).

The Exonuclease domain maps to 8–171 (LIWLDLEMTG…DDIKDSIMEL (164 aa)). Tyrosine 129 is a catalytic residue.

The protein belongs to the oligoribonuclease family.

It localises to the cytoplasm. Its function is as follows. 3'-to-5' exoribonuclease specific for small oligoribonucleotides. The protein is Oligoribonuclease of Pseudoalteromonas translucida (strain TAC 125).